The following is a 596-amino-acid chain: Probable ABC transporter ECU01_0200/ECU01_1410 (596 aa).

3 consecutive transmembrane segments (helical) span residues A26–I46, L173–I193, and L289–I309. The ABC transmembrane type-1 domain maps to K39 to T318. Residues V361 to A593 form the ABC transporter domain. ATP is bound by residues Y370 and G400–R411.

This sequence belongs to the ABC transporter superfamily. ABCB family. Heavy Metal importer (TC 3.A.1.210) subfamily.

It localises to the membrane. In Encephalitozoon cuniculi (strain GB-M1) (Microsporidian parasite), this protein is Probable ABC transporter ECU01_0200/ECU01_1410.